Reading from the N-terminus, the 38-residue chain is Photosystem II reaction center protein L (38 aa).

A helical transmembrane segment spans residues 17–37; the sequence is SLYWGLLLIFVLAVLFSSYIF.

It belongs to the PsbL family. PSII is composed of 1 copy each of membrane proteins PsbA, PsbB, PsbC, PsbD, PsbE, PsbF, PsbH, PsbI, PsbJ, PsbK, PsbL, PsbM, PsbT, PsbX, PsbY, PsbZ, Psb30/Ycf12, at least 3 peripheral proteins of the oxygen-evolving complex and a large number of cofactors. It forms dimeric complexes.

It is found in the plastid. It localises to the chloroplast thylakoid membrane. One of the components of the core complex of photosystem II (PSII). PSII is a light-driven water:plastoquinone oxidoreductase that uses light energy to abstract electrons from H(2)O, generating O(2) and a proton gradient subsequently used for ATP formation. It consists of a core antenna complex that captures photons, and an electron transfer chain that converts photonic excitation into a charge separation. This subunit is found at the monomer-monomer interface and is required for correct PSII assembly and/or dimerization. The protein is Photosystem II reaction center protein L of Ostreococcus tauri.